The primary structure comprises 318 residues: Taste receptor type 2 member 117 (318 aa).

Topologically, residues 1–16 (MQHNLKTIFVISHSTL) are extracellular. Residues 17 to 37 (TIILFTELVTGIIGNGFMALV) traverse the membrane as a helical segment. Over 38–53 (HCMDWLRRKKISLVNQ) the chain is Cytoplasmic. Residues 54 to 74 (ILTALAISRIFQLCLLFISLV) traverse the membrane as a helical segment. Topologically, residues 75–93 (ISFSYPDLTTTSLIKVTCN) are extracellular. Residues 94–114 (LWIIVNHFNIWLATCLGIFYF) form a helical membrane-spanning segment. Residues 115–134 (LKISNFSNSLFLYLKWRVEK) are Cytoplasmic-facing. The helical transmembrane segment at 135–155 (VVLVTLLVSLVLLTLNSLLIN) threads the bilayer. Residues 156-189 (LEINICINEYQRNITYSFNSYYHANCHRQMLSLH) are Extracellular-facing. An N-linked (GlcNAc...) asparagine glycan is attached at N168. A helical membrane pass occupies residues 190 to 210 (IIFLSVPFVLSLSTFLLLIFS). Residues 211–238 (LGTHHKKMQQHVQGRRDASTMAHFKALQ) lie on the Cytoplasmic side of the membrane. Residues 239–259 (TVIAFLLLYSIFILSVLVQIW) traverse the membrane as a helical segment. Over 260 to 268 (KYELLKKNL) the chain is Extracellular. The chain crosses the membrane as a helical span at residues 269-289 (FILFCQVAYVAFPSFHSYILI). Residues 290–318 (LGDMKMRQACLSVLWWQKFRKNYVEPLDL) lie on the Cytoplasmic side of the membrane.

It belongs to the G-protein coupled receptor T2R family.

The protein resides in the membrane. Putative taste receptor which may play a role in the perception of bitterness. The chain is Taste receptor type 2 member 117 from Rattus norvegicus (Rat).